The primary structure comprises 506 residues: Cobyric acid synthase (506 aa).

Residues 251–448 (DIDIAVVQVP…LHGLFDSDAF (198 aa)) form the GATase cobBQ-type domain. Cysteine 332 serves as the catalytic Nucleophile. Histidine 440 is a catalytic residue.

This sequence belongs to the CobB/CobQ family. CobQ subfamily.

The protein operates within cofactor biosynthesis; adenosylcobalamin biosynthesis. Its function is as follows. Catalyzes amidations at positions B, D, E, and G on adenosylcobyrinic A,C-diamide. NH(2) groups are provided by glutamine, and one molecule of ATP is hydrogenolyzed for each amidation. In Citrobacter koseri (strain ATCC BAA-895 / CDC 4225-83 / SGSC4696), this protein is Cobyric acid synthase.